Consider the following 270-residue polypeptide: Tryptophan synthase alpha chain (270 aa).

Catalysis depends on proton acceptor residues E57 and D68.

Belongs to the TrpA family. As to quaternary structure, tetramer of two alpha and two beta chains.

The enzyme catalyses (1S,2R)-1-C-(indol-3-yl)glycerol 3-phosphate + L-serine = D-glyceraldehyde 3-phosphate + L-tryptophan + H2O. It participates in amino-acid biosynthesis; L-tryptophan biosynthesis; L-tryptophan from chorismate: step 5/5. Its function is as follows. The alpha subunit is responsible for the aldol cleavage of indoleglycerol phosphate to indole and glyceraldehyde 3-phosphate. This chain is Tryptophan synthase alpha chain, found in Mycobacterium bovis (strain ATCC BAA-935 / AF2122/97).